The primary structure comprises 219 residues: Orotate phosphoribosyltransferase (219 aa).

5-phospho-alpha-D-ribose 1-diphosphate is bound at residue K26. Position 34–35 (34–35 (FF)) interacts with orotate. 5-phospho-alpha-D-ribose 1-diphosphate is bound by residues 72-73 (YK), R102, K103, K106, H108, and 128-136 (DDVITAGTA). Positions 132 and 160 each coordinate orotate.

The protein belongs to the purine/pyrimidine phosphoribosyltransferase family. PyrE subfamily. As to quaternary structure, homodimer.

It catalyses the reaction orotidine 5'-phosphate + diphosphate = orotate + 5-phospho-alpha-D-ribose 1-diphosphate. The protein operates within pyrimidine metabolism; UMP biosynthesis via de novo pathway; UMP from orotate: step 1/2. Catalyzes the transfer of a ribosyl phosphate group from 5-phosphoribose 1-diphosphate to orotate, leading to the formation of orotidine monophosphate (OMP). This chain is Orotate phosphoribosyltransferase (URA5), found in Yarrowia lipolytica (strain CLIB 122 / E 150) (Yeast).